Reading from the N-terminus, the 189-residue chain is Glutathione-dependent formaldehyde-activating enzyme (189 aa).

One can recognise a CENP-V/GFA domain in the interval 20–166; sequence FAGGTLVCAC…LRTIGLEPYD (147 aa). Residues Cys-27, Cys-29, Cys-48, Cys-50, Cys-53, Cys-95, and Cys-98 each coordinate Zn(2+).

Belongs to the Gfa family. It depends on Zn(2+) as a cofactor.

It carries out the reaction S-(hydroxymethyl)glutathione = glutathione + formaldehyde. It functions in the pathway one-carbon metabolism; formaldehyde degradation; formate from formaldehyde (glutathione route): step 1/3. Catalyzes the condensation of formaldehyde and glutathione to S-hydroxymethylglutathione. In Mesorhizobium japonicum (strain LMG 29417 / CECT 9101 / MAFF 303099) (Mesorhizobium loti (strain MAFF 303099)), this protein is Glutathione-dependent formaldehyde-activating enzyme.